Reading from the N-terminus, the 218-residue chain is LHFPL tetraspan subfamily member 3 protein (218 aa).

A run of 4 helical transmembrane segments spans residues 22–42, 96–116, 126–146, and 177–197; these read IGVL…VCFI, FFIG…GLFF, ICAW…MIFP, and ILAI…FVLG.

It belongs to the LHFP family.

The protein resides in the membrane. In Xenopus laevis (African clawed frog), this protein is LHFPL tetraspan subfamily member 3 protein.